The sequence spans 268 residues: Small ribosomal subunit protein uS2 (268 aa).

Belongs to the universal ribosomal protein uS2 family.

The polypeptide is Small ribosomal subunit protein uS2 (Caulobacter vibrioides (strain ATCC 19089 / CIP 103742 / CB 15) (Caulobacter crescentus)).